Reading from the N-terminus, the 335-residue chain is tRNA N6-adenosine threonylcarbamoyltransferase (335 aa).

Histidine 112 and histidine 116 together coordinate Fe cation. Substrate-binding positions include 134–138 (VVSGG), aspartate 167, glycine 180, and asparagine 273. Aspartate 301 provides a ligand contact to Fe cation.

This sequence belongs to the KAE1 / TsaD family. It depends on Fe(2+) as a cofactor.

The protein resides in the cytoplasm. The catalysed reaction is L-threonylcarbamoyladenylate + adenosine(37) in tRNA = N(6)-L-threonylcarbamoyladenosine(37) in tRNA + AMP + H(+). Required for the formation of a threonylcarbamoyl group on adenosine at position 37 (t(6)A37) in tRNAs that read codons beginning with adenine. Is involved in the transfer of the threonylcarbamoyl moiety of threonylcarbamoyl-AMP (TC-AMP) to the N6 group of A37, together with TsaE and TsaB. TsaD likely plays a direct catalytic role in this reaction. The chain is tRNA N6-adenosine threonylcarbamoyltransferase from Shouchella clausii (strain KSM-K16) (Alkalihalobacillus clausii).